The primary structure comprises 485 residues: BTB/POZ domain-containing protein YLR108C (485 aa).

Residues 26-121 (EVFKIRIGQK…LIKEYDYHFT (96 aa)) enclose the BTB domain.

It localises to the nucleus. The chain is BTB/POZ domain-containing protein YLR108C from Saccharomyces cerevisiae (strain ATCC 204508 / S288c) (Baker's yeast).